The primary structure comprises 695 residues: MSTQSRWQELADQVRHHRQLYYYGEPEISDADFDALLQELKDLEQAHPEVVTGASPTEEVAPAPPTSSPFRNVDHREQMLSLDNVFDTEQLAGWLDRTPAKTYLTELKIDGASINLLYIDGQLELALTRGDGTTGEDITHNARTLDDIPDTLHGTDEFPVPELVEIRGEVFIDVEDFAAMNAQRQAEGLKMFANPRNAAAGAMRQKNSADTAKRPLKLICHGIGAREGFSPASQHDAYRAIAAWGLPVSPYTKQVHSAKEVQQQVEYWGNHRHDAAHEMDGLVVKVDSLEEQLELGHTSRAPRWAIAYKYPPEEAMTTLHNIRVGIGRTGRATPYAVMAPKYVAGSTVSMATLHNPTEAHRKGVLLGDTITIRKAGEVIPEVLGPVEDKRTGAERPFLFSTFCPECGTRLAPSKVGDADWRCPNTQYCPGQLHTRLTYLASRKAFDIDALGEKGAYDLIHSGVLADESELFDLRAEDLEKTSSYATKAGKLNKSGETLLEKLQSAKEADLWRVLVALSIRHVGPTAAKALAKHFESVEDIASASAEEMAGIDGVAETIAESISDWFTVDWHRRIVDRWAAAGVRMRREAGNVPGAADGVDSALLEGLTIVVTGSLEDFDRTAAKEAIEARGGKAAGSVSKKTDFLVAGEKAGSKLKKAEDLGVPVLDEAAFKELLENGAPSSGDDASTSADSVDD.

Residue 30–34 coordinates NAD(+); sequence DADFD. The interval 52–71 is disordered; it reads TGASPTEEVAPAPPTSSPFR. NAD(+) contacts are provided by residues 81 to 82 and glutamate 106; that span reads SL. The N6-AMP-lysine intermediate role is filled by lysine 108. The NAD(+) site is built by arginine 129, glutamate 169, lysine 285, and lysine 309. Zn(2+) is bound by residues cysteine 403, cysteine 406, cysteine 422, and cysteine 428. Residues 599 to 688 form the BRCT domain; the sequence is VDSALLEGLT…APSSGDDAST (90 aa). Residues 676–695 form a disordered region; it reads ENGAPSSGDDASTSADSVDD. Residues 679–695 show a composition bias toward low complexity; it reads APSSGDDASTSADSVDD.

Belongs to the NAD-dependent DNA ligase family. LigA subfamily. It depends on Mg(2+) as a cofactor. Mn(2+) serves as cofactor.

It carries out the reaction NAD(+) + (deoxyribonucleotide)n-3'-hydroxyl + 5'-phospho-(deoxyribonucleotide)m = (deoxyribonucleotide)n+m + AMP + beta-nicotinamide D-nucleotide.. In terms of biological role, DNA ligase that catalyzes the formation of phosphodiester linkages between 5'-phosphoryl and 3'-hydroxyl groups in double-stranded DNA using NAD as a coenzyme and as the energy source for the reaction. It is essential for DNA replication and repair of damaged DNA. The chain is DNA ligase from Corynebacterium jeikeium (strain K411).